Reading from the N-terminus, the 236-residue chain is 2-C-methyl-D-erythritol 4-phosphate cytidylyltransferase (236 aa).

The protein belongs to the IspD/TarI cytidylyltransferase family. IspD subfamily.

It carries out the reaction 2-C-methyl-D-erythritol 4-phosphate + CTP + H(+) = 4-CDP-2-C-methyl-D-erythritol + diphosphate. Its pathway is isoprenoid biosynthesis; isopentenyl diphosphate biosynthesis via DXP pathway; isopentenyl diphosphate from 1-deoxy-D-xylulose 5-phosphate: step 2/6. Catalyzes the formation of 4-diphosphocytidyl-2-C-methyl-D-erythritol from CTP and 2-C-methyl-D-erythritol 4-phosphate (MEP). This chain is 2-C-methyl-D-erythritol 4-phosphate cytidylyltransferase, found in Burkholderia pseudomallei (strain 1106a).